We begin with the raw amino-acid sequence, 548 residues long: Acetylcholine receptor subunit alpha-type des-2 (548 aa).

The first 19 residues, 1-19, serve as a signal peptide directing secretion; the sequence is MLIIIQSLLLATTASLCIA. The Extracellular segment spans residues 21–239; that stretch reads TPVPTQIRLV…LTLYLRRKPL (219 aa). Residues Asn52, Asn96, and Asn224 are each glycosylated (N-linked (GlcNAc...) asparagine). 3 helical membrane passes run 240-260, 274-294, and 301-321; these read FYLV…IVGF, VSLG…VSDQ, and FIPL…LGTV. The interval 422–460 is disordered; it reads LIHLSPTAHQPDESISPSAPPVPSSSPLPPPLTPGPADD. Pro residues predominate over residues 439–455; it reads SAPPVPSSSPLPPPLTP. The chain crosses the membrane as a helical span at residues 517 to 537; the sequence is FVIFVVAFLIITFGINFIGFI. The Cytoplasmic segment spans residues 538-548; it reads HWHQAGVEYGG.

It belongs to the ligand-gated ion channel (TC 1.A.9) family. Acetylcholine receptor (TC 1.A.9.1) subfamily. In terms of assembly, the functional receptor is a heteromer of deg-3 and des-2. Interacts with ric-3; which is required for proper receptor folding.

It is found in the cell membrane. Its function is as follows. Subunit of the non-synaptic neuronal acetylcholine receptor (AChR), which may play a role in chemotaxis towards choline. After binding choline or acetylcholine, the AChR responds by an extensive change in conformation that affects all subunits and leads to opening of an ion-conducting channel across the plasma membrane. This chain is Acetylcholine receptor subunit alpha-type des-2 (des-2), found in Caenorhabditis elegans.